We begin with the raw amino-acid sequence, 67 residues long: MARITVEDCLKVIPNRFNMTLAATVRARQISVGSTPMIDAGRDKPIVIALRELAQKKYNENILNTIR.

This sequence belongs to the RNA polymerase subunit omega family. As to quaternary structure, the RNAP catalytic core consists of 2 alpha, 1 beta, 1 beta' and 1 omega subunit. When a sigma factor is associated with the core the holoenzyme is formed, which can initiate transcription.

The catalysed reaction is RNA(n) + a ribonucleoside 5'-triphosphate = RNA(n+1) + diphosphate. Functionally, promotes RNA polymerase assembly. Latches the N- and C-terminal regions of the beta' subunit thereby facilitating its interaction with the beta and alpha subunits. This chain is DNA-directed RNA polymerase subunit omega, found in Nitrosomonas eutropha (strain DSM 101675 / C91 / Nm57).